The chain runs to 1493 residues: ABC transporter C family member 7 (1493 aa).

A run of 10 helical transmembrane segments spans residues 21–41 (FPMF…GSCV), 70–90 (VVIC…LSCF), 102–122 (LMIL…SFYI), 140–160 (VWWV…IALY), 165–185 (LVSV…LFLC), 309–329 (ILLS…APYL), 343–360 (YSNQ…AKLV), 423–443 (WYMH…LILY), 448–468 (LGSI…IPLA), and 535–555 (SVLW…CMLL). An ABC transmembrane type-1 1 domain is found at 309-590 (ILLSTLFAFV…LPDTISMIVQ (282 aa)). Residues 624–847 (VEVSNGAFSW…GTDFMELVGA (224 aa)) form the ABC transporter 1 domain. 659–666 (GTVGSGKS) lines the ATP pocket. Positions 863–898 (ASAQSTTSKESKVSNDEEKQEEDLPSPKGQLVQEEE) are disordered. Position 888 is a phosphoserine (S888). The next 6 membrane-spanning stretches (helical) occupy residues 915-935 (LAYG…FQVL), 959-979 (GSTL…CILV), 1038-1055 (FSNL…IGVM), 1059-1081 (AWQV…QYYI), 1153-1173 (LSTV…EGVI), and 1177-1197 (FAGL…TLIW). An ABC transmembrane type-1 2 domain is found at 922 to 1204 (VPIILVVQIL…LIWTLCDLEN (283 aa)). Residues 1241 to 1475 (ITICNLQVRY…KSSSFSKLVA (235 aa)) enclose the ABC transporter 2 domain. An ATP-binding site is contributed by 1275–1282 (GRTGCGKS).

It belongs to the ABC transporter superfamily. ABCC family. Conjugate transporter (TC 3.A.1.208) subfamily. In terms of tissue distribution, ubiquitous.

It localises to the membrane. It carries out the reaction ATP + H2O + xenobioticSide 1 = ADP + phosphate + xenobioticSide 2.. Its function is as follows. Pump for glutathione S-conjugates. This Arabidopsis thaliana (Mouse-ear cress) protein is ABC transporter C family member 7 (ABCC7).